The chain runs to 312 residues: Olfactory receptor 6N1 (312 aa).

Over 1 to 25 (MDTGNWSQVAEFIILGFPHLQGVQI) the chain is Extracellular. N-linked (GlcNAc...) asparagine glycosylation is present at Asn5. The chain crosses the membrane as a helical span at residues 26–46 (YLFLLLLLIYLMTVLGNLLIF). Residues 47 to 54 (LVVCLDSR) lie on the Cytoplasmic side of the membrane. A helical membrane pass occupies residues 55–75 (LHTPMYHFVSILSFSELGYTA). At 76 to 99 (ATIPKMLANLLSEKKTISFSGCLL) the chain is on the extracellular side. A disulfide bridge connects residues Cys97 and Cys189. Residues 100–120 (QIYFFHSLGATECYLLTAMAY) traverse the membrane as a helical segment. At 121–139 (DRYLAICRPLHYPTLMTPT) the chain is on the cytoplasmic side. A helical membrane pass occupies residues 140–160 (LCAEIAIGCWLGGLAGPVVEI). Residues 161 to 197 (SLISRLPFCGPNRIQHVFCDFPPVLSLACTDTSINVL) are Extracellular-facing. Residues 198–217 (VDFVINSCKILATFLLILCS) form a helical membrane-spanning segment. At 218–237 (YVQIICTVLRIPSAAGKRKA) the chain is on the cytoplasmic side. Residues 238–258 (ISTCASHFTVVLIFYGSILSM) traverse the membrane as a helical segment. The Extracellular portion of the chain corresponds to 259–271 (YVQLKKSYSLDYD). The chain crosses the membrane as a helical span at residues 272–292 (QALAVVYSVLTPFLNPFIYSL). The Cytoplasmic segment spans residues 293–312 (RNKEIKEAVRRQLKRIGILA).

Belongs to the G-protein coupled receptor 1 family.

It localises to the cell membrane. Its function is as follows. Odorant receptor. This chain is Olfactory receptor 6N1 (OR6N1), found in Homo sapiens (Human).